The sequence spans 270 residues: Aquaporin-11 (270 aa).

The next 2 membrane-spanning stretches (helical) occupy residues 5–25 (IMTM…ISIC) and 59–79 (FELG…GLFF). Positions 94-96 (DPS) match the NPA 1 motif. Residues 120–140 (IMGAAVSYRFAKIFWSFGLMA) traverse the membrane as a helical segment. Residue Asn148 is glycosylated (N-linked (GlcNAc...) asparagine). 2 helical membrane passes run 153–173 (ASLQ…TIVN) and 184–204 (MLIS…VSGG). Residues 207–209 (NPT) carry the NPA 2 motif. The helical transmembrane segment at 220-240 (GLSGPSFFLVYWFGPILGSSI) threads the bilayer.

This sequence belongs to the MIP/aquaporin (TC 1.A.8) family.

It localises to the membrane. The enzyme catalyses H2O(in) = H2O(out). In terms of biological role, probable intracellular unorthodox aquaporin that may modulate the water content and osmolytes during anhydrobiosis. This Milnesium tardigradum (Water bear) protein is Aquaporin-11.